Consider the following 524-residue polypeptide: Peptide chain release factor 3 (524 aa).

Positions 8-276 (NKRRTFAIIS…GFAKYAPAPE (269 aa)) constitute a tr-type G domain. GTP-binding positions include 17–24 (SHPDAGKT), 85–89 (DTPGH), and 139–142 (NKLD).

The protein belongs to the TRAFAC class translation factor GTPase superfamily. Classic translation factor GTPase family. PrfC subfamily.

Its subcellular location is the cytoplasm. Its function is as follows. Increases the formation of ribosomal termination complexes and stimulates activities of RF-1 and RF-2. It binds guanine nucleotides and has strong preference for UGA stop codons. It may interact directly with the ribosome. The stimulation of RF-1 and RF-2 is significantly reduced by GTP and GDP, but not by GMP. The sequence is that of Peptide chain release factor 3 from Hydrogenovibrio crunogenus (strain DSM 25203 / XCL-2) (Thiomicrospira crunogena).